We begin with the raw amino-acid sequence, 206 residues long: Large ribosomal subunit protein eL13y (206 aa).

A disordered region spans residues 182-206 (LERTNKRHAGARAKRAADAEKEEKK). Residues 186–195 (NKRHAGARAK) are compositionally biased toward basic residues. Residues 196 to 206 (RAADAEKEEKK) show a composition bias toward basic and acidic residues.

It belongs to the eukaryotic ribosomal protein eL13 family.

The sequence is that of Large ribosomal subunit protein eL13y from Brassica napus (Rape).